A 120-amino-acid chain; its full sequence is uncharacterized protein (120 aa).

The helical transmembrane segment at 47–63 threads the bilayer; it reads VSIVIGLCTVLISAGAG.

It localises to the membrane. This is an uncharacterized protein from Sinorhizobium fredii (strain NBRC 101917 / NGR234).